Consider the following 277-residue polypeptide: NH(3)-dependent NAD(+) synthetase (277 aa).

Residue 47-54 (GISGGQDS) coordinates ATP. D53 serves as a coordination point for Mg(2+). R141 serves as a coordination point for deamido-NAD(+). T161 is an ATP binding site. Mg(2+) is bound at residue E166. K174 and D181 together coordinate deamido-NAD(+). Residues K190 and T212 each coordinate ATP. Deamido-NAD(+) is bound at residue 261–262 (HK).

This sequence belongs to the NAD synthetase family. In terms of assembly, homodimer.

It catalyses the reaction deamido-NAD(+) + NH4(+) + ATP = AMP + diphosphate + NAD(+) + H(+). The protein operates within cofactor biosynthesis; NAD(+) biosynthesis; NAD(+) from deamido-NAD(+) (ammonia route): step 1/1. Catalyzes the ATP-dependent amidation of deamido-NAD to form NAD. Uses ammonia as a nitrogen source. The polypeptide is NH(3)-dependent NAD(+) synthetase (Lactobacillus johnsonii (strain CNCM I-12250 / La1 / NCC 533)).